The primary structure comprises 401 residues: Ninja-family protein MODD (401 aa).

2 disordered regions span residues 95–135 and 215–238; these read KQGV…GEGR and TGNK…GLPP. Positions 105 to 130 are enriched in low complexity; sequence RPSGGAEAEPAAARLPASGSPSSGSS. Residues 217 to 226 are compositionally biased toward polar residues; the sequence is NKKTGGNVNH.

The protein belongs to the Ninja family. In terms of assembly, interacts with BZIP46, TPR3 and PUB70.

It localises to the nucleus. Acts as a negative regulator of abscisic acid (ABA) signaling and drought tolerance. Mediates deactivation and degradation of BZIP46, a positive regulator of ABA signaling and drought stress tolerance. Represses BZIP46 activity via interaction with the TPR3-HDAC1 corepressor complex and down-regulation of the histone acetylation level at BZIP46 target genes. Promotes BZIP46 degradation via interaction with the U-box type ubiquitin E3 ligase PUB70. The polypeptide is Ninja-family protein MODD (Oryza sativa subsp. japonica (Rice)).